The sequence spans 472 residues: Karilysin (472 aa).

The first 20 residues, 1 to 20 (MKRFILLFFLSTIAIFKVYS), serve as a signal peptide directing secretion. Positions 21–34 (QRLYDNGPLTGDNN) are cleaved as a propeptide — activation peptide. Zn(2+) contacts are provided by His102, Asp104, His117, His133, and His155. Glu156 (proton donor/acceptor) is an active-site residue. Residues His159 and His165 each coordinate Zn(2+). The propeptide at 196-386 (YGYPFSISGP…AVSCSRTISP (191 aa)) is removed in short form. A propeptide spans 387–472 (FTLSPNPATD…QTYTQKLIKK (86 aa)) (removed in long form).

This sequence belongs to the peptidase M10A family. It depends on Zn(2+) as a cofactor. Processes itself into the mature 18-kDa enzyme (Kly18) through sequential autoproteolytic cleavage at both the N- and C-termini. However, the maturation intermediate Kly38 is found to be more active than Kly18 and the rate for its processing is slow, which raises the question as to whether Kly38 is a physiologically relevant entity.

It is found in the secreted. With respect to regulation, autoprocessing and proteolytic activity are completely inhibited by EDTA and 1,10-phenanthroline in vitro. Proteolytic activity is 3-fold enhanced by Ca(2+) due to stabilization of the protein structure but inhibited by an excess of Zn(2+). Inhibitory studies of karilysin identified several phage display-selected peptides with apparent inhibition constants (Ki) in the micromolar range, among which is the tetrapeptide SWFP (Ki=10.7 uM). Functionally, metalloprotease able to cleave casein, gelatin, elastin, fibrinogen and fibronectin. Shows exclusive preference for hydrophobic residues, especially Leu, Tyr and Met, at the P1' position of substrates, and for Pro or Ala at P3. Can efficiently cleave the antimicrobial peptide LL-37 which is a component of the immune system, leading to a significant reduction of its bactericidal activity. Is also able to inhibit all pathways of the human complement system. The classical and lectin complement pathways are inhibited because of the efficient degradation of mannose-binding lectin, ficolin-2, ficolin-3, and C4 by karilysin, whereas inhibition of the terminal pathway is caused by cleavage of C5. Thus, karilysin appears to be a major virulence factor of T.forsythia that contributes to evasion of the human immune response and periodontal disease. Seems to act synergistically with gingipains from the periodontal pathogen P.gingivalis present at the same sites of infection. The sequence is that of Karilysin (kly) from Tannerella forsythia (strain ATCC 43037 / JCM 10827 / CCUG 21028 A / KCTC 5666 / FDC 338) (Bacteroides forsythus).